We begin with the raw amino-acid sequence, 486 residues long: CUGBP Elav-like family member 5 (486 aa).

Over residues 1 to 11 (MARLTEREARR) the composition is skewed to basic and acidic residues. Residues 1 to 39 (MARLTEREARRQQQQHPPQQQQPRACPMSGPEPPAQQSD) form a disordered region. Positions 12–24 (QQQQHPPQQQQPR) are enriched in low complexity. RRM domains are found at residues 47–128 (IKLF…PADS), 135–215 (RKLF…FADT), and 401–479 (CNLF…LKRP).

The protein belongs to the CELF/BRUNOL family.

It localises to the nucleus. Its subcellular location is the cytoplasm. RNA-binding protein that may be implicated in the regulation of pre-mRNA alternative splicing. This chain is CUGBP Elav-like family member 5 (celf5), found in Xenopus tropicalis (Western clawed frog).